A 511-amino-acid chain; its full sequence is Keratin, type II cytoskeletal 72 (511 aa).

A head region spans residues 1–124 (MSRQLTHFPR…DPEIQRVRAQ (124 aa)). The coil 1A stretch occupies residues 125 to 160 (EREQIKALNNKFASFIDKVRFLEQQNQVLETKWNLL). Positions 125-438 (EREQIKALNN…KLLESEECRM (314 aa)) constitute an IF rod domain. The interval 161 to 179 (QQLDLNNCRKNLEPIYEGY) is linker 1. The interval 180 to 271 (ISNLQKQLEM…CLYEGEITQI (92 aa)) is coil 1B. Residues 272–295 (QSHISDTSIVLSMDNNRDLDLDSI) form a linker 12 region. Positions 296–434 (IAEVRAQYEE…ATYRKLLESE (139 aa)) are coil 2. Positions 435–511 (ECRMSGEYPN…SSCATKKASR (77 aa)) are tail. The tract at residues 486–511 (GSCGSELKDPLAKTSGSSCATKKASR) is disordered.

Belongs to the intermediate filament family. As to quaternary structure, heterotetramer of two type I and two type II keratins. Highly expressed in hair follicles from scalp and eyebrow. Also expressed in palmoplantar epidermis. Not expressed in face skin despite the presence of fine hairs histologically. In hair, it is specifically present in the inner root sheath (IRS) of the hair follicle. Present in the IRS cuticle, but not in Henle or Huxley layers of the IRS. In the IRS cuticle, its presence is delayed up to the height of the apex of the dermal papilla (at protein level).

Its function is as follows. Has a role in hair formation. Specific component of keratin intermediate filaments in the inner root sheath (IRS) of the hair follicle. This is Keratin, type II cytoskeletal 72 (KRT72) from Homo sapiens (Human).